A 667-amino-acid chain; its full sequence is Protein MAIN-LIKE 2 (667 aa).

Met1 carries the post-translational modification N-acetylmethionine. Positions 492–508 (MRGKERVRRKGMGKRRK) are enriched in basic residues. Disordered regions lie at residues 492-523 (MRGKERVRRKGMGKRRKGIDPMEDYGGSEDES) and 594-667 (KLQE…TVVA). Residues 512 to 523 (PMEDYGGSEDES) are compositionally biased toward acidic residues. 2 stretches are compositionally biased toward basic and acidic residues: residues 608 to 618 (YDVKKEDKESK) and 656 to 667 (SLDRRGENTVVA).

As to expression, expressed in root tips, the shoot apical meristem (SAM), leaves, mature flowers and embryos.

Its subcellular location is the nucleus. Maybe required to maintain cell division activity in meristematic cells. The protein is Protein MAIN-LIKE 2 of Arabidopsis thaliana (Mouse-ear cress).